Reading from the N-terminus, the 44-residue chain is Phosphatase RapE inhibitor (44 aa).

2 propeptides span residues 1–30 (MKSK…MKEA) and 36–44 (LAPTHEFLV).

The protein belongs to the Phr family. In terms of processing, contains a predicted signal peptide cleavage site in the N-terminal region, however the propeptide is probably only subject to processing events at the ends of the mature peptide.

The protein localises to the secreted. It is found in the cytoplasm. In terms of biological role, signaling molecule involved in the regulation of sporulation. Secreted during production, but the mature peptide acts intracellularly, indicating that it needs to be imported into the cell to function. Inhibitor of the RapE phosphatase activity. Does not inhibit the phosphatase activity of RapA and RapB. Probably plays a dispensable role in the overall context of sporulation initiation. This chain is Phosphatase RapE inhibitor (phrE), found in Bacillus subtilis (strain 168).